The following is a 216-amino-acid chain: Serine acetyltransferase (216 aa).

This sequence belongs to the transferase hexapeptide repeat family.

Its subcellular location is the cytoplasm. It catalyses the reaction L-serine + acetyl-CoA = O-acetyl-L-serine + CoA. The protein operates within amino-acid biosynthesis; L-cysteine biosynthesis; L-cysteine from L-serine: step 1/2. This Staphylococcus xylosus protein is Serine acetyltransferase (cysE).